Here is a 742-residue protein sequence, read N- to C-terminus: Hapless 2 (742 aa).

The N-terminal stretch at 1–19 (MKFLAFGLIYFHFCILNRC) is a signal peptide. The Extracellular segment spans residues 20-540 (EYITSSTIQK…CYFSAGCIKE (521 aa)). 7 disulfide bridges follow: Cys-30-Cys-40, Cys-118-Cys-147, Cys-129-Cys-182, Cys-148-Cys-312, Cys-150-Cys-168, Cys-295-Cys-319, and Cys-431-Cys-470. Residues 152–179 (LSDILGMGNDLSRGKVCYALNLGAGSAT) form an important for membrane fusion region. Residues 541–561 (AFKSIASIAGVASALALVIFL) traverse the membrane as a helical segment. The Cytoplasmic portion of the chain corresponds to 562–742 (AKNGYLVPII…STSPLYLLIE (181 aa)).

It belongs to the HAP2/GCS1 family.

Its subcellular location is the cell membrane. The protein resides in the cell junction. During fertilization, required for the formation of intercellular membrane pores and subsequent exchange of gametic pronuclei between cells. Probably initiates the formation of intercellular membrane pores by inserting part of its extracellular domain into the cell membrane of the adjoining cell in the mating pair. Mating requires the presence of HAP2 on at least one of the two cells. Mating efficiency is high when HAP2 is present on both cells, and is strongly reduced when HAP2 is present on only one of the two cells. This chain is Hapless 2, found in Tetrahymena thermophila.